A 22-amino-acid polypeptide reads, in one-letter code: Dioicin-1 (22 aa).

The protein localises to the secreted. Its subcellular location is the extracellular space. It is found in the golgi apparatus. The protein resides in the vacuole. It catalyses the reaction Endohydrolysis of the N-glycosidic bond at one specific adenosine on the 28S rRNA.. Nicks pBR322 dsDNA. Has adenine polynucleotide glycosidase activity on herring sperm ssDNA. The protein is Dioicin-1 of Phytolacca dioica (Bella sombra tree).